The primary structure comprises 168 residues: Peptide deformylase 2 (168 aa).

Residues Cys91 and His133 each coordinate Fe cation. Glu134 is a catalytic residue. A Fe cation-binding site is contributed by His137.

It belongs to the polypeptide deformylase family. It depends on Fe(2+) as a cofactor.

The catalysed reaction is N-terminal N-formyl-L-methionyl-[peptide] + H2O = N-terminal L-methionyl-[peptide] + formate. Functionally, removes the formyl group from the N-terminal Met of newly synthesized proteins. Requires at least a dipeptide for an efficient rate of reaction. N-terminal L-methionine is a prerequisite for activity but the enzyme has broad specificity at other positions. This Vibrio parahaemolyticus serotype O3:K6 (strain RIMD 2210633) protein is Peptide deformylase 2.